The primary structure comprises 235 residues: Large ribosomal subunit protein uL1 (235 aa).

Belongs to the universal ribosomal protein uL1 family. As to quaternary structure, part of the 50S ribosomal subunit.

Binds directly to 23S rRNA. The L1 stalk is quite mobile in the ribosome, and is involved in E site tRNA release. In terms of biological role, protein L1 is also a translational repressor protein, it controls the translation of the L11 operon by binding to its mRNA. In Prochlorococcus marinus (strain MIT 9515), this protein is Large ribosomal subunit protein uL1.